The following is a 472-amino-acid chain: Flap endonuclease 1 (472 aa).

Positions 1–106 are N-domain; sequence MGIKGLARFL…EELMKRKERR (106 aa). Aspartate 34 contributes to the Mg(2+) binding site. Positions 47 and 72 each coordinate DNA. Mg(2+)-binding residues include aspartate 88, glutamate 160, glutamate 162, aspartate 181, and aspartate 183. The interval 124-263 is I-domain; it reads TIRKQLIRTI…LTAYKLLKKH (140 aa). Glutamate 160 serves as a coordination point for DNA. DNA-binding residues include glycine 241 and aspartate 243. Aspartate 243 provides a ligand contact to Mg(2+). Residues 348-356 form an interaction with PCNA region; that stretch reads AQTSLDSFF.

The protein belongs to the XPG/RAD2 endonuclease family. FEN1 subfamily. Interacts with PCNA. Three molecules of FEN1 bind to one PCNA trimer with each molecule binding to one PCNA monomer. PCNA stimulates the nuclease activity without altering cleavage specificity. Mg(2+) serves as cofactor. Post-translationally, phosphorylated. Phosphorylation upon DNA damage induces relocalization to the nuclear plasma.

It is found in the nucleus. Its subcellular location is the nucleolus. The protein localises to the nucleoplasm. The protein resides in the mitochondrion. In terms of biological role, structure-specific nuclease with 5'-flap endonuclease and 5'-3' exonuclease activities involved in DNA replication and repair. During DNA replication, cleaves the 5'-overhanging flap structure that is generated by displacement synthesis when DNA polymerase encounters the 5'-end of a downstream Okazaki fragment. It enters the flap from the 5'-end and then tracks to cleave the flap base, leaving a nick for ligation. Also involved in the long patch base excision repair (LP-BER) pathway, by cleaving within the apurinic/apyrimidinic (AP) site-terminated flap. Acts as a genome stabilization factor that prevents flaps from equilibrating into structures that lead to duplications and deletions. Also possesses 5'-3' exonuclease activity on nicked or gapped double-stranded DNA, and exhibits RNase H activity. Also involved in replication and repair of rDNA and in repairing mitochondrial DNA. The protein is Flap endonuclease 1 of Cryptosporidium muris (strain RN66).